Here is a 282-residue protein sequence, read N- to C-terminus: Pyrroline-5-carboxylate reductase (282 aa).

The protein belongs to the pyrroline-5-carboxylate reductase family.

It catalyses the reaction L-proline + NADP(+) = (S)-1-pyrroline-5-carboxylate + NADPH + 2 H(+). The enzyme catalyses L-proline + NAD(+) = (S)-1-pyrroline-5-carboxylate + NADH + 2 H(+). It participates in amino-acid biosynthesis; L-proline biosynthesis; L-proline from L-glutamate 5-semialdehyde: step 1/1. The chain is Pyrroline-5-carboxylate reductase (pro3) from Schizosaccharomyces pombe (strain 972 / ATCC 24843) (Fission yeast).